A 297-amino-acid chain; its full sequence is Inosose dehydratase (297 aa).

Belongs to the IolE/MocC family. It depends on glutathione as a cofactor. Co(2+) is required as a cofactor. The cofactor is Mn(2+).

It catalyses the reaction scyllo-inosose = 3D-3,5/4-trihydroxycyclohexane-1,2-dione + H2O. Its pathway is polyol metabolism; myo-inositol degradation into acetyl-CoA; acetyl-CoA from myo-inositol: step 2/7. Catalyzes the dehydration of inosose (2-keto-myo-inositol, 2KMI or 2,4,6/3,5-pentahydroxycyclohexanone) to 3D-(3,5/4)-trihydroxycyclohexane-1,2-dione (D-2,3-diketo-4-deoxy-epi-inositol). The sequence is that of Inosose dehydratase from Clostridium perfringens (strain ATCC 13124 / DSM 756 / JCM 1290 / NCIMB 6125 / NCTC 8237 / Type A).